Consider the following 162-residue polypeptide: NADH-quinone oxidoreductase subunit I (162 aa).

4Fe-4S ferredoxin-type domains follow at residues L53–E83 and T93–I122. [4Fe-4S] cluster contacts are provided by C63, C66, C69, C73, C102, C105, C108, and C112.

Belongs to the complex I 23 kDa subunit family. NDH-1 is composed of 14 different subunits. Subunits NuoA, H, J, K, L, M, N constitute the membrane sector of the complex. [4Fe-4S] cluster is required as a cofactor.

It is found in the cell inner membrane. The catalysed reaction is a quinone + NADH + 5 H(+)(in) = a quinol + NAD(+) + 4 H(+)(out). NDH-1 shuttles electrons from NADH, via FMN and iron-sulfur (Fe-S) centers, to quinones in the respiratory chain. The immediate electron acceptor for the enzyme in this species is believed to be ubiquinone. Couples the redox reaction to proton translocation (for every two electrons transferred, four hydrogen ions are translocated across the cytoplasmic membrane), and thus conserves the redox energy in a proton gradient. This is NADH-quinone oxidoreductase subunit I from Dechloromonas aromatica (strain RCB).